The following is a 347-amino-acid chain: uncharacterized protein (347 aa).

The Cytoplasmic portion of the chain corresponds to 1–44 (MWNPKKKSEALAKFKSFPYPKPGTSNVLDSKEGDTRRKYFTKTH). The helical; Signal-anchor for type II membrane protein transmembrane segment at 45–62 (LHRLFVFVVLLLCSGYFL) threads the bilayer. The Lumenal segment spans residues 63–347 (KHTLLTRPKE…RGWRKLVPFL (285 aa)).

Belongs to the glycosyltransferase 34 family.

The protein localises to the endoplasmic reticulum membrane. This is an uncharacterized protein from Schizosaccharomyces pombe (strain 972 / ATCC 24843) (Fission yeast).